Here is a 289-residue protein sequence, read N- to C-terminus: ATP synthase subunit a (289 aa).

6 consecutive transmembrane segments (helical) span residues 43–63 (AFHL…LLIF), 104–124 (IAPL…VDLI), 160–180 (FCVF…GGFI), 193–213 (IFVQ…TLIA), 232–252 (VFIL…GLGV), and 259–279 (AVFH…LTIV).

The protein belongs to the ATPase A chain family. F-type ATPases have 2 components, CF(1) - the catalytic core - and CF(0) - the membrane proton channel. CF(1) has five subunits: alpha(3), beta(3), gamma(1), delta(1), epsilon(1). CF(0) has three main subunits: a(1), b(2) and c(9-12). The alpha and beta chains form an alternating ring which encloses part of the gamma chain. CF(1) is attached to CF(0) by a central stalk formed by the gamma and epsilon chains, while a peripheral stalk is formed by the delta and b chains.

The protein localises to the cell inner membrane. Its function is as follows. Key component of the proton channel; it plays a direct role in the translocation of protons across the membrane. The polypeptide is ATP synthase subunit a (Pseudomonas putida (strain ATCC 47054 / DSM 6125 / CFBP 8728 / NCIMB 11950 / KT2440)).